We begin with the raw amino-acid sequence, 714 residues long: Choline transporter-like protein 5 (714 aa).

At 1–33 the chain is on the cytoplasmic side; the sequence is MGRRSAAPTSPFGEPRKFDPKFKGPIGKRHCTD. The chain crosses the membrane as a helical span at residues 34 to 54; sequence VLCCIIFVVVILGYIALGVVA. The Extracellular portion of the chain corresponds to 55–237; it reads WIHGDPRKII…KIFEDYASSW (183 aa). 4 N-linked (GlcNAc...) asparagine glycosylation sites follow: asparagine 83, asparagine 132, asparagine 192, and asparagine 205. A helical transmembrane segment spans residues 238–258; sequence YWILIALFIAMVVSLLFLILL. Residues 259-261 lie on the Cytoplasmic side of the membrane; it reads RFT. A helical transmembrane segment spans residues 262 to 282; sequence AGVFFWIFIIGVIGVVGYGIW. Over 283–320 the chain is Extracellular; that stretch reads HCFWEYDSLKGVPGADLTIYDIGLQTDFRVYLQLRQTW. The chain crosses the membrane as a helical span at residues 321–341; that stretch reads LAFMILLCIVEVIIILMLIFL. The Cytoplasmic portion of the chain corresponds to 342–346; the sequence is RNRIR. Residues 347–367 traverse the membrane as a helical segment; sequence IAIALLQEGSRAIGYIMSTLF. Topologically, residues 368–369 are extracellular; the sequence is YP. A helical transmembrane segment spans residues 370–390; the sequence is IITFILIAICISYWAVTAVFM. Residues 391-455 are Cytoplasmic-facing; that stretch reads ATSGEPIYKV…QYILIFQLCN (65 aa). Residues 456 to 476 form a helical membrane-spanning segment; that stretch reads VFVFLWLVNFSIALGQCTLAG. Residues 477 to 510 lie on the Extracellular side of the membrane; sequence AFASYYWAFKKPADIPACPLFSSFGRAIRYHTGS. Residues 511 to 531 traverse the membrane as a helical segment; it reads LALGSLILALVQFIRIILEYL. Over 532–605 the chain is Cytoplasmic; the sequence is DHKLKASQNS…RVAVLDKVTD (74 aa). A helical membrane pass occupies residues 606–626; sequence FLLFLGKVFVTGSVGVLAFFF. Residues 627-644 are Extracellular-facing; sequence FTRKIPVLTDEAPALNYY. The helical transmembrane segment at 645–665 threads the bilayer; it reads WVPLLTVLIGSYLIAHGFFSV. The Cytoplasmic segment spans residues 666-711; it reads YAMCVDTLFLCFCEDLERNNGSSSKPYYMSPNLHRILGKKEILSKK.

This sequence belongs to the CTL (choline transporter-like) family.

It localises to the cell membrane. It catalyses the reaction choline(out) + n H(+)(in) = choline(in) + n H(+)(out). In terms of biological role, choline/H+ antiporter. The polypeptide is Choline transporter-like protein 5 (slc44a5) (Xenopus tropicalis (Western clawed frog)).